Consider the following 216-residue polypeptide: Peroxiredoxin (216 aa).

Residues 2–158 enclose the Thioredoxin domain; that stretch reads VVIGEKFPEV…ILRLVKALKI (157 aa). Catalysis depends on C46, which acts as the Cysteine sulfenic acid (-SOH) intermediate. R121 lines the substrate pocket. Cysteines 205 and 211 form a disulfide.

It belongs to the peroxiredoxin family. Prx6 subfamily. As to quaternary structure, homodecamer. Pentamer of dimers that assemble into a ring structure.

Its subcellular location is the cytoplasm. The catalysed reaction is a hydroperoxide + [thioredoxin]-dithiol = an alcohol + [thioredoxin]-disulfide + H2O. In terms of biological role, thiol-specific peroxidase that catalyzes the reduction of hydrogen peroxide and organic hydroperoxides to water and alcohols, respectively. Plays a role in cell protection against oxidative stress by detoxifying peroxides. The chain is Peroxiredoxin from Pyrococcus abyssi (strain GE5 / Orsay).